Reading from the N-terminus, the 466-residue chain is IQ domain-containing protein C (466 aa).

Residues 6–35 (LVRKVSALQACVRGFLVRRQFQSLRAEYEA) enclose the IQ domain. Disordered stretches follow at residues 105-157 (KSGE…PHSQ), 214-233 (EQACERDQSQPSAPLEDQSY), 238-310 (TGEL…QTFG), and 394-466 (VLDL…EPPG). Over residues 132-153 (PSQEKTRDTTRMENPEATDQRL) the composition is skewed to basic and acidic residues. Over residues 282-293 (GPPSSIPSNSQA) the composition is skewed to polar residues. The segment covering 297–306 (RLTKGPDDGR) has biased composition (basic and acidic residues). Ser-438 is subject to Phosphoserine.

The polypeptide is IQ domain-containing protein C (IQCC) (Homo sapiens (Human)).